The following is a 172-amino-acid chain: Large ribosomal subunit protein uL10 (172 aa).

The protein belongs to the universal ribosomal protein uL10 family. In terms of assembly, part of the ribosomal stalk of the 50S ribosomal subunit. The N-terminus interacts with L11 and the large rRNA to form the base of the stalk. The C-terminus forms an elongated spine to which L12 dimers bind in a sequential fashion forming a multimeric L10(L12)X complex.

In terms of biological role, forms part of the ribosomal stalk, playing a central role in the interaction of the ribosome with GTP-bound translation factors. The protein is Large ribosomal subunit protein uL10 of Ruegeria pomeroyi (strain ATCC 700808 / DSM 15171 / DSS-3) (Silicibacter pomeroyi).